Reading from the N-terminus, the 437-residue chain is C-terminal-binding protein 2 (437 aa).

Residues S103, 183 to 188 (IGLGRI), D207, 240 to 246 (CNLNEHN), 267 to 269 (TAR), and D293 contribute to the NAD(+) site. R269 is a catalytic residue. The active site involves E298. Catalysis depends on H318, which acts as the Proton donor. 318–321 (HTAW) contacts NAD(+). Positions 410-437 (PLIPSVSHTPSPGQTTKPDPDREIPTDQ) are disordered. The segment covering 415–426 (VSHTPSPGQTTK) has biased composition (polar residues). The segment covering 427-437 (PDPDREIPTDQ) has biased composition (basic and acidic residues).

This sequence belongs to the D-isomer specific 2-hydroxyacid dehydrogenase family. In terms of assembly, interacts with the C-terminus of tcf7l1-a via the consensus motifs P-X-[DNS]-L-[STVA].

It localises to the nucleus. Corepressor targeting diverse transcription regulators. This chain is C-terminal-binding protein 2 (ctbp2), found in Xenopus laevis (African clawed frog).